The chain runs to 340 residues: Nesprin-4 (340 aa).

2 disordered regions span residues 1 to 86 and 254 to 277; these read MAQF…DGGK and HRRRLQKPQDKKRQGPPSLPDAML. Residues 1–291 are Cytoplasmic-facing; it reads MAQFPLLGHG…GVPAPASRRP (291 aa). Residues 53–63 show a composition bias toward basic and acidic residues; sequence APEHFMDEPKS. One can recognise a KASH domain in the interval 283–340; that stretch reads VPAPASRRPLTFLLLLLFLLLVGATLLLPLSGVPCCSHTRLARTPYLVLSYVNGLPPI. Residues 292–312 form a helical; Anchor for type IV membrane protein membrane-spanning segment; the sequence is LTFLLLLLFLLLVGATLLLPL. Residues 313–340 lie on the Perinuclear space side of the membrane; that stretch reads SGVPCCSHTRLARTPYLVLSYVNGLPPI.

The protein belongs to the nesprin family. Core component of LINC complexes which are composed of inner nuclear membrane SUN domain-containing proteins coupled to outer nuclear membrane KASH domain-containing nesprins. SUN and KASH domain-containing proteins seem to bind each other promiscuously; however, differentially expression of LINC complex constituents can give rise to specific assemblies. Probably part of a SUN1-containing LINC complex. Interacts with kinesins KIF5B and KLC1.

Its subcellular location is the nucleus outer membrane. Functionally, as a component of the LINC (LInker of Nucleoskeleton and Cytoskeleton) complex, involved in the connection between the nuclear lamina and the cytoskeleton. The nucleocytoplasmic interactions established by the LINC complex play an important role in the transmission of mechanical forces across the nuclear envelope and in nuclear movement and positioning. Behaves as a kinesin cargo, providing a functional binding site for kinesin-1 at the nuclear envelope. Hence may contribute to the establishment of secretory epithelial morphology, by promoting kinesin-dependent apical migration of the centrosome and Golgi apparatus and basal localization of the nucleus. The sequence is that of Nesprin-4 (Syne4) from Rattus norvegicus (Rat).